The following is a 536-amino-acid chain: MALLYITTAALALLLLFLRAVFKSWRIQRKLPPGPPGLPLIGNIHQIPAVRAHQKFTEWAKVYGGLYTFRIGPATAAVITDRGLVKELLDKRSALYSSRPVSYVGQNLITGGDHLLLMDNNEMWRLFRKTVHQHFKASMCEKEHVKLLEAEHTQMMRDFLLYPEKHMLHTKRTTNSIIMSLLYGIRTPSWDTPHMRELYEIMEQWSKVMETGATPPVDIFPWLRWIPQRWLGNWVDRSVEVGSGMKALYGSFRRRAIEARREAEQSSQSRARTFIDHVLDLQEKANLTDNQVDFLGGVMMEGGSDTGSTMLLVMIQALVRYPEVQERARAELDAVCGEGRSPTWADFSRLPYINMIVKETMRWRPVTPLSFPHALNQDDWVNGYLLPKGTTVFLNVWGLHHDESIFPNPERFDPSHYEGRHNLASDYAASPDYMQRDHFIYGAGRRLCPGIHLSERSMFIGAAKLLWCFQFEPEMDESGRPVAIDTDPITGYTEGFLVCPQAYKCKVSPRSTARAETIMREFAQAESEVLCQYATP.

A helical transmembrane segment spans residues 2-22; sequence ALLYITTAALALLLLFLRAVF. Position 448 (C448) interacts with heme.

Belongs to the cytochrome P450 family. Heme is required as a cofactor.

Its subcellular location is the membrane. It participates in secondary metabolite biosynthesis; terpenoid biosynthesis. Cytochrome P450 monooxygenase; part of the gene cluster that mediates the biosynthesis of macrophorins, isoprenoid epoxycyclohexenones containing cyclized drimane moieties. The first step of the pathway is the synthesis of 6-methylsalicylic acid (6-MSA) by the polyketide synthase macA. 6-MSA is then converted to m-cresol by the decarboxylase macB. The cytochrome P450 monooxygenase macC then catalyzes the oxidation of m-cresol to toluquinol. Epoxidation of toluquinol is then performed by the short chain dehydrogenase macD, with the help of macE, and a further prenylation by macG leads to 7-deacetoxyyanuthone A. The next step is the hydroxylation of C-22 of 7-deacetoxyyanuthone A by the cytochrome P450 monooxygenase macH to yield 22-deacetylyanuthone A. O-Mevalon transferase macI then attaches mevalon to the hydroxyl group of 22-deacetylyanuthone A to produce yanuthone E. The terpene cyclase macJ catalyzes the cyclization of 22-deacetylyanuthone A to macrophorin A. MacJ is also able to catalyze cyclization of yanuthone E and 7-deacetoxyyanuthone A to their corresponding macrophorins. The macJ products can be further modified by macH and macJ, as well as by the FAD-dependent monooxygenase macF, to produce additional macrophorins, including 4'-oxomacrophorin A, 4'-oxomacrophorin D and 4'-oxomacrophorin E. In Penicillium terrestre, this protein is Cytochrome P450 monooxygenase macC.